The primary structure comprises 117 residues: PBP1-interacting protein XAC1 (117 aa).

The disordered stretch occupies residues 1–60 (MSKAPSQPAKKWMSARTLAKSEDATNRKSNTAAPASQPSQQPASVMHERPTPPPPAPVQL). The span at 32–44 (AAPASQPSQQPAS) shows a compositional bias: low complexity.

In terms of assembly, forms a complex composed of at least MKT1, PBP1, XAC1 and LSM12. Forms a complex composed of at least MKT1L, PBP1, XAC1 and LSM12.

It is found in the cytoplasm. Its function is as follows. Involved in post-transcriptional regulation of gene expression. This is PBP1-interacting protein XAC1 from Trypanosoma brucei brucei (strain 927/4 GUTat10.1).